The primary structure comprises 550 residues: Hydroxylamine reductase (550 aa).

Positions 3, 6, 18, and 25 each coordinate [2Fe-2S] cluster. Positions 249, 273, 317, 405, 433, 458, 492, and 494 each coordinate hybrid [4Fe-2O-2S] cluster. Residue Cys405 is modified to Cysteine persulfide.

Belongs to the HCP family. [2Fe-2S] cluster serves as cofactor. Hybrid [4Fe-2O-2S] cluster is required as a cofactor.

The protein resides in the cytoplasm. The enzyme catalyses A + NH4(+) + H2O = hydroxylamine + AH2 + H(+). Catalyzes the reduction of hydroxylamine to form NH(3) and H(2)O. The protein is Hydroxylamine reductase of Salmonella enteritidis PT4 (strain P125109).